The sequence spans 490 residues: Betaine aldehyde dehydrogenase (490 aa).

Residues Ile-27 and Asp-93 each coordinate K(+). 150-152 contacts NAD(+); it reads GAW. The active-site Charge relay system is the Lys-162. Residue 176-179 participates in NAD(+) binding; it reads KPSE. Val-180 contributes to the K(+) binding site. Position 230–233 (230–233) interacts with NAD(+); the sequence is GTDT. A K(+)-binding site is contributed by Leu-246. Glu-252 functions as the Proton acceptor in the catalytic mechanism. NAD(+)-binding residues include Gly-254, Cys-286, and Glu-387. The active-site Nucleophile is Cys-286. The residue at position 286 (Cys-286) is a Cysteine sulfenic acid (-SOH). Lys-457 and Gly-460 together coordinate K(+). Residue Glu-464 is the Charge relay system of the active site.

Belongs to the aldehyde dehydrogenase family. In terms of assembly, dimer of dimers. K(+) serves as cofactor.

The catalysed reaction is betaine aldehyde + NAD(+) + H2O = glycine betaine + NADH + 2 H(+). It participates in amine and polyamine biosynthesis; betaine biosynthesis via choline pathway; betaine from betaine aldehyde: step 1/1. In terms of biological role, involved in the biosynthesis of the osmoprotectant glycine betaine. Catalyzes the irreversible oxidation of betaine aldehyde to the corresponding acid. In Pseudomonas fluorescens (strain Pf0-1), this protein is Betaine aldehyde dehydrogenase.